Here is a 298-residue protein sequence, read N- to C-terminus: Acetylglutamate kinase (298 aa).

Substrate contacts are provided by residues glycine 69–glycine 70, arginine 91, and asparagine 196.

The protein belongs to the acetylglutamate kinase family. ArgB subfamily.

Its subcellular location is the cytoplasm. It catalyses the reaction N-acetyl-L-glutamate + ATP = N-acetyl-L-glutamyl 5-phosphate + ADP. It participates in amino-acid biosynthesis; L-arginine biosynthesis; N(2)-acetyl-L-ornithine from L-glutamate: step 2/4. Its function is as follows. Catalyzes the ATP-dependent phosphorylation of N-acetyl-L-glutamate. This Rhodopseudomonas palustris (strain BisA53) protein is Acetylglutamate kinase.